The chain runs to 1390 residues: DNA-directed RNA polymerase subunit beta (1390 aa).

It belongs to the RNA polymerase beta chain family. In terms of assembly, the RNAP catalytic core consists of 2 alpha, 1 beta, 1 beta' and 1 omega subunit. When a sigma factor is associated with the core the holoenzyme is formed, which can initiate transcription.

The enzyme catalyses RNA(n) + a ribonucleoside 5'-triphosphate = RNA(n+1) + diphosphate. Functionally, DNA-dependent RNA polymerase catalyzes the transcription of DNA into RNA using the four ribonucleoside triphosphates as substrates. The polypeptide is DNA-directed RNA polymerase subunit beta (Rhodopseudomonas palustris (strain HaA2)).